Reading from the N-terminus, the 1230-residue chain is Cullin-associated NEDD8-dissociated protein 1 (1230 aa).

Residue Ala2 is modified to N-acetylalanine. 12 HEAT repeats span residues 2 to 39 (ASASYHISNLLEKMTSSDKDFRFMATNDLMTELQKDSI), 44 to 81 (DSERKVVKMILRLLEDKNGEVQNLAVKCLGPLVSKVKE), 83 to 119 (QVETIVDTLCTNMLSDKEQLRDISSIGLKTVIGELPP), 131 to 165 (CKKITGRLTSAIAKQEDVSVQLEALDIMADMLSRQ), 171 to 208 (NFHPSILTCLLPQLTSPRLAVRKRTIIALGHLVMSCGN), 210 to 247 (VFVDLIEHLLSELSKNDSMSTTRTYIQCIAAISRQAGH), 248 to 282 (RIGEYLEKIIPLVVKFCNVDDDELREYCIQAFESF), 289 to 366 (EVYP…TRHE), 370 to 407 (EFYKTVSPALIARFKEREENVKADVFHAYLSLLKQTRP), 424 to 467 (PLTM…VLPG), 471 to 510 (QHIPVLVPGIIFSLNDKSSSSNLKIDALSCLYVILCNHSP), and 515 to 552 (PHVQALVPPVVACVGDPFYKITSEALLVTQQLVKVIRP). Residues 315–344 (DEDEDENAMDADGGDDDDQGSDDEYSDDDD) form a disordered region. A Phosphoserine modification is found at Ser335. The residue at position 558 (Ser558) is a Phosphoserine. HEAT repeat units lie at residues 563-602 (PYIKDLFTCTIKRLKAADIDQEVKERAISCMGQIICNLGD), 606-643 (PDLSNTLQIFLERLKNEITRLTTVKALTLIAGSPLKID), 646-683 (PVLGEGVPILASFLRKNQRALKLGTLSALDILIKNYSD), 688-725 (AMIDAVLDELPPLISESDMHVSQMAISFLTTLAKVYPS), 729-768 (KISGSILNELIGLVRSPLLQGGALSAMLDFFQALVVTGTN), 770-808 (LGYMDLLRMLTGPVYSQSTALTHKQSYYSIAKCVAALTR), 809-845 (ACPKEGPAVVGQFIQDVKNSRSTDSIRLLALLSLGEV), 852-889 (SGQLELKSVILEAFSSPSEEVKSAASYALGSISVGNLP), 890-927 (EYLPFVLQEITSQPKRQYLLLHSLKEIISSASVAGLKP), 928-960 (YVENIWALLLKHCECAEEGTRNVVAECLGKLTL), 961-998 (IDPETLLPRLKGYLISGSSYARSSVVTAVKFTISDHPQ), 1002-1039 (PLLKNCIGDFLKTLEDPDLNVRRVALVTFNSAAHNKPS), 1043-1097 (DLLD…DSCL), 1099-1133 (RLDIFEFLNHVEDGLKDHYDIKMLTFLMLVRLSTL), and 1140-1189 (QRLD…IPEA). Residue Lys971 is modified to N6-acetyllysine.

The protein belongs to the CAND family. As to quaternary structure, interacts with TBP. Part of a complex that contains CUL1 and RBX1. Interacts with unneddylated cullins: interacts with CUL1, CUL2, CUL3, CUL4A, CUL4B and CUL5. Does not bind neddylated CUL1. Interaction with cullins is abolished in presence of COMMD1, which antagonizes with CAND1 for interacting with cullins. Interacts with ERCC6. Interacts with DCUN1D1, DCUN1D2, DCUN1D3, DCUN1D4 and DCUN1D5; these interactions are bridged by cullins and strongly inhibits the neddylation of cullins.

The protein resides in the cytoplasm. It is found in the nucleus. Functionally, key assembly factor of SCF (SKP1-CUL1-F-box protein) E3 ubiquitin ligase complexes that promotes the exchange of the substrate-recognition F-box subunit in SCF complexes, thereby playing a key role in the cellular repertoire of SCF complexes. Acts as a F-box protein exchange factor. The exchange activity of CAND1 is coupled with cycles of neddylation conjugation: in the deneddylated state, cullin-binding CAND1 binds CUL1-RBX1, increasing dissociation of the SCF complex and promoting exchange of the F-box protein. Probably plays a similar role in other cullin-RING E3 ubiquitin ligase complexes. This is Cullin-associated NEDD8-dissociated protein 1 (Cand1) from Mus musculus (Mouse).